The sequence spans 270 residues: Fibroblast growth factor 5 (270 aa).

The first 20 residues, 1-20 (MSLSFLLLLFLSHLILSAWA), serve as a signal peptide directing secretion. Residues 26–83 (LAPKGQPGPAATGRNPAGASSSRSSRGTTSSSSSSVSSSHSASLGNQGSGLEQSSFQW) form a disordered region. Over residues 43–68 (GASSSRSSRGTTSSSSSSVSSSHSAS) the composition is skewed to low complexity. Residues 69-83 (LGNQGSGLEQSSFQW) are compositionally biased toward polar residues. Residue asparagine 112 is glycosylated (N-linked (GlcNAc...) asparagine). A disordered region spans residues 236-257 (PEKKKPPSPVKPKVPLSAPRKS).

Belongs to the heparin-binding growth factors family. As to quaternary structure, interacts with FGFR1 and FGFR2. Affinity between fibroblast growth factors (FGFs) and their receptors is increased by heparan sulfate glycosaminoglycans that function as coreceptors. In terms of tissue distribution, expressed in skin.

The protein localises to the secreted. Its function is as follows. Plays an important role in the regulation of cell proliferation and cell differentiation. Required for normal regulation of the hair growth cycle. Functions as an inhibitor of hair elongation by promoting progression from anagen, the growth phase of the hair follicle, into catagen the apoptosis-induced regression phase. The polypeptide is Fibroblast growth factor 5 (FGF5) (Felis catus (Cat)).